Reading from the N-terminus, the 519-residue chain is MAPIPKTVGRIKLDCSLRPSCPLEVAAAPKLCKEFGPEDYGEEDIVDFLRRLVESDPQGLHRIHVDGSSGRLQLWHHDYLLGHLDDEGKSTGQSDRGKGAEGLGTYCGLRKSFLYPPQESEPCPQSPSASATFPSVSDSLLQVAMPQKLLVTEEEANRLAEELVAEEERMKQKAEKKRLKKKRQKERKRQERLEQYCGEPKASTTSDGDESPPSSPGNPVQGQCGEEEDSLDLSSTFVSLALRKVGDWPLSARREKGLNQEPQGRGLALQKMGQEEESPPREERPQQSPKVQASPGLLAAALQQSQELAKLGTSFAQNGFYHEAVVLFTQALKLNPQDHRLFGNRSFCHERLGQPAWALADAQVALTLRPGWPRGLFRLGKALMGLQRFREAAAVFQETLRGGSQPDAARELRSCLLHLTLQGQRGGICAPPLSPGALQPLPHAELAPSGLPSLRCPRSTALRSPGLSPLLHYPSCHRSHPNQPLSQTQSRRPHPLKPQDPSKGWDILGLGLQHLSQAR.

The stretch at 147-197 (QKLLVTEEEANRLAEELVAEEERMKQKAEKKRLKKKRQKERKRQERLEQYC) forms a coiled coil. A compositionally biased stretch (basic residues) spans 175–187 (EKKRLKKKRQKER). Disordered regions lie at residues 175 to 230 (EKKR…EEDS) and 253 to 294 (RREK…VQAS). Ser-278 carries the post-translational modification Phosphoserine. 3 TPR repeats span residues 305–338 (SQEL…NPQD), 339–372 (HRLF…RPGW), and 373–406 (PRGL…GSQP). Residues 474-506 (PSCHRSHPNQPLSQTQSRRPHPLKPQDPSKGWD) are disordered. Over residues 481–490 (PNQPLSQTQS) the composition is skewed to polar residues.

This Homo sapiens (Human) protein is Tetratricopeptide repeat protein 31 (TTC31).